Reading from the N-terminus, the 213-residue chain is Adenylate kinase (213 aa).

Position 10 to 15 (10 to 15) interacts with ATP; that stretch reads GSGKGT. The tract at residues 30 to 59 is NMP; it reads SVGDLLRNIISSSSELGKKIKGTVESGNLI. AMP is bound by residues Arg36, 57–59, 83–86, and Gln90; these read NLI and GFPR. An LID region spans residues 125 to 160; the sequence is NRLACLDCKSIYSVSSFKSTTCAKCKSTRLEKRIDD. Arg126 is an ATP binding site. Cys129 and Cys132 together coordinate Zn(2+). 135–136 provides a ligand contact to ATP; the sequence is IY. Residues Cys146 and Cys149 each coordinate Zn(2+). The AMP site is built by Arg157 and Arg169. Leu195 serves as a coordination point for ATP.

This sequence belongs to the adenylate kinase family. As to quaternary structure, monomer.

Its subcellular location is the cytoplasm. The enzyme catalyses AMP + ATP = 2 ADP. The protein operates within purine metabolism; AMP biosynthesis via salvage pathway; AMP from ADP: step 1/1. In terms of biological role, catalyzes the reversible transfer of the terminal phosphate group between ATP and AMP. Plays an important role in cellular energy homeostasis and in adenine nucleotide metabolism. This is Adenylate kinase from Wolbachia sp. subsp. Drosophila simulans (strain wRi).